We begin with the raw amino-acid sequence, 1026 residues long: UPF0182 protein FRAAL6027 (1026 aa).

The next 7 helical transmembrane spans lie at 13-33 (AKVI…VAIF), 60-80 (ILLF…NIVL), 108-128 (YMKL…GLSA), 167-187 (FLLG…VLTH), 208-228 (AHIS…YYLD), 250-270 (AVLP…VLFI), and 283-303 (LGAG…PAFI). Residues 877–888 (AAAGAGTGATTT) show a composition bias toward low complexity. Disordered regions lie at residues 877-916 (AAAG…LQDA) and 958-1026 (LASP…PPPG). Gly residues predominate over residues 889–903 (TGGGGQATTQGGGTG). Low complexity predominate over residues 970–1001 (PTPSRSAAPTTRGTAAGSAPPGTTPAVAAPAG). The segment covering 1016-1026 (PQQPRAAPPPG) has biased composition (pro residues).

It belongs to the UPF0182 family.

The protein localises to the cell membrane. The chain is UPF0182 protein FRAAL6027 from Frankia alni (strain DSM 45986 / CECT 9034 / ACN14a).